The sequence spans 212 residues: Thiamine-phosphate synthase (212 aa).

4-amino-2-methyl-5-(diphosphooxymethyl)pyrimidine contacts are provided by residues 40–44 (QFREK) and N75. Positions 76 and 95 each coordinate Mg(2+). S113 provides a ligand contact to 4-amino-2-methyl-5-(diphosphooxymethyl)pyrimidine. 2-[(2R,5Z)-2-carboxy-4-methylthiazol-5(2H)-ylidene]ethyl phosphate is bound at residue 139–141 (TTS). A 4-amino-2-methyl-5-(diphosphooxymethyl)pyrimidine-binding site is contributed by K142. Residues G171 and 191 to 192 (IS) contribute to the 2-[(2R,5Z)-2-carboxy-4-methylthiazol-5(2H)-ylidene]ethyl phosphate site.

This sequence belongs to the thiamine-phosphate synthase family. Mg(2+) serves as cofactor.

It carries out the reaction 2-[(2R,5Z)-2-carboxy-4-methylthiazol-5(2H)-ylidene]ethyl phosphate + 4-amino-2-methyl-5-(diphosphooxymethyl)pyrimidine + 2 H(+) = thiamine phosphate + CO2 + diphosphate. The catalysed reaction is 2-(2-carboxy-4-methylthiazol-5-yl)ethyl phosphate + 4-amino-2-methyl-5-(diphosphooxymethyl)pyrimidine + 2 H(+) = thiamine phosphate + CO2 + diphosphate. The enzyme catalyses 4-methyl-5-(2-phosphooxyethyl)-thiazole + 4-amino-2-methyl-5-(diphosphooxymethyl)pyrimidine + H(+) = thiamine phosphate + diphosphate. The protein operates within cofactor biosynthesis; thiamine diphosphate biosynthesis; thiamine phosphate from 4-amino-2-methyl-5-diphosphomethylpyrimidine and 4-methyl-5-(2-phosphoethyl)-thiazole: step 1/1. In terms of biological role, condenses 4-methyl-5-(beta-hydroxyethyl)thiazole monophosphate (THZ-P) and 2-methyl-4-amino-5-hydroxymethyl pyrimidine pyrophosphate (HMP-PP) to form thiamine monophosphate (TMP). The chain is Thiamine-phosphate synthase from Staphylococcus saprophyticus subsp. saprophyticus (strain ATCC 15305 / DSM 20229 / NCIMB 8711 / NCTC 7292 / S-41).